A 598-amino-acid chain; its full sequence is Elongation factor 4 (598 aa).

The region spanning 2 to 184 (KNIRNFSIIA…EIVHKIPAPE (183 aa)) is the tr-type G domain. Residues 14-19 (DHGKST) and 131-134 (NKID) each bind GTP.

It belongs to the TRAFAC class translation factor GTPase superfamily. Classic translation factor GTPase family. LepA subfamily.

It is found in the cell inner membrane. It catalyses the reaction GTP + H2O = GDP + phosphate + H(+). Its function is as follows. Required for accurate and efficient protein synthesis under certain stress conditions. May act as a fidelity factor of the translation reaction, by catalyzing a one-codon backward translocation of tRNAs on improperly translocated ribosomes. Back-translocation proceeds from a post-translocation (POST) complex to a pre-translocation (PRE) complex, thus giving elongation factor G a second chance to translocate the tRNAs correctly. Binds to ribosomes in a GTP-dependent manner. The polypeptide is Elongation factor 4 (Pasteurella multocida (strain Pm70)).